We begin with the raw amino-acid sequence, 120 residues long: MSIRTDKVSSLLQRELSAIFEKELPRSGPLVTVTEVRMTADLGIARVYVSVIGSEAQRAEVMEYLDAENKMIRKTLSAKIRHQFRRIPELEFYEDRLFEQANRIEQLLKSVKPARDEEQH.

Belongs to the RbfA family. In terms of assembly, monomer. Binds 30S ribosomal subunits, but not 50S ribosomal subunits or 70S ribosomes.

The protein resides in the cytoplasm. In terms of biological role, one of several proteins that assist in the late maturation steps of the functional core of the 30S ribosomal subunit. Associates with free 30S ribosomal subunits (but not with 30S subunits that are part of 70S ribosomes or polysomes). Required for efficient processing of 16S rRNA. May interact with the 5'-terminal helix region of 16S rRNA. This chain is Ribosome-binding factor A, found in Chlorobaculum tepidum (strain ATCC 49652 / DSM 12025 / NBRC 103806 / TLS) (Chlorobium tepidum).